A 991-amino-acid chain; its full sequence is Bone morphogenetic protein 1 (991 aa).

An N-terminal signal peptide occupies residues 1–25 (MPGVARPPLPLLSLPLLLLLLLLPR). Positions 26-125 (AGRPLDLADY…RWRGRPRSRR (100 aa)) are excised as a propeptide. The disordered stretch occupies residues 86–131 (ARRPSIKAAGNSSALGGQGTSGQPQRESRGRWRGRPRSRRAATSRP). The span at 95 to 110 (GNSSALGGQGTSGQPQ) shows a compositional bias: polar residues. The N-linked (GlcNAc...) asparagine glycan is linked to N96. Basic residues predominate over residues 116 to 127 (RWRGRPRSRRAA). Positions 126 to 325 (AATSRPERVW…AQARKLYKCP (200 aa)) constitute a Peptidase M12A domain. The N-linked (GlcNAc...) asparagine glycan is linked to N147. 4 cysteine pairs are disulfide-bonded: C168/C324, C188/C210, C190/C191, and C327/C353. H218 contacts Zn(2+). E219 is an active-site residue. Zn(2+)-binding residues include H222 and H228. CUB domains lie at 327-439 (CGET…YEAI) and 440-551 (CGGD…NFFK). N-linked (GlcNAc...) asparagine glycans are attached at residues N337 and N368. 15 cysteine pairs are disulfide-bonded: C380–C402, C440–C466, C493–C515, C556–C568, C564–C577, C579–C592, C596–C622, C649–C671, C712–C723, C719–C732, C734–C747, C752–C778, C805–C827, C865–C895, and C922–C944. An EGF-like 1; calcium-binding domain is found at 552-593 (EVDECSRPNRGGCEQRCLNTLGSYKCSCDPGYELAPDKRRCE). One can recognise a CUB 3 domain in the interval 596-707 (CGGFLTKLNG…KKGFKAHFFS (112 aa)). N604 is a glycosylation site (N-linked (GlcNAc...) asparagine). The EGF-like 2; calcium-binding domain maps to 708–748 (DKDECSKDNGGCQQDCVNTFGSYECQCRSGFVLHDNKHDCK). CUB domains follow at residues 752–864 (CEHK…HSTE) and 865–981 (CGGQ…YTST). 2 positions are modified to omega-N-methylarginine: R939 and R942.

As to quaternary structure, interacts with POSTN, the interaction promotes deposition on the extracellular matrix. Requires Zn(2+) as cofactor. As to expression, at high levels in embryonic maternal deciduum and floor plate region of the neural tube. Less in developing membranous and endochondral bone, submucosa of intestine, dermis of skin and the mesenchyme of spleen and lung.

The protein resides in the golgi apparatus. It localises to the trans-Golgi network. It is found in the secreted. Its subcellular location is the extracellular space. The protein localises to the extracellular matrix. The enzyme catalyses Cleavage of the C-terminal propeptide at Ala-|-Asp in type I and II procollagens and at Arg-|-Asp in type III.. With respect to regulation, activity is increased by the procollagen C-endopeptidase enhancer protein. Its function is as follows. Metalloprotease that plays key roles in regulating the formation of the extracellular matrix (ECM) via processing of various precursor proteins into mature functional enzymes or structural proteins. Thereby participates in several developmental and physiological processes such as cartilage and bone formation, muscle growth and homeostasis, wound healing and tissue repair. Roles in ECM formation include cleavage of the C-terminal propeptides from procollagens such as procollagen I, II and III or the proteolytic activation of the enzyme lysyl oxidase LOX, necessary to formation of covalent cross-links in collagen and elastic fibers. Additional substrates include matricellular thrombospondin-1/THBS1 whose cleavage leads to cell adhesion disruption and TGF-beta activation. This Mus musculus (Mouse) protein is Bone morphogenetic protein 1 (Bmp1).